The sequence spans 261 residues: 5'-nucleotidase SurE (261 aa).

Residues Asp-8, Asp-9, Ser-39, and Asn-91 each coordinate a divalent metal cation.

The protein belongs to the SurE nucleotidase family. The cofactor is a divalent metal cation.

The protein resides in the cytoplasm. It catalyses the reaction a ribonucleoside 5'-phosphate + H2O = a ribonucleoside + phosphate. Its function is as follows. Nucleotidase that shows phosphatase activity on nucleoside 5'-monophosphates. In Polaromonas naphthalenivorans (strain CJ2), this protein is 5'-nucleotidase SurE.